A 103-amino-acid polypeptide reads, in one-letter code: Large ribosomal subunit protein bL21 (103 aa).

This sequence belongs to the bacterial ribosomal protein bL21 family. As to quaternary structure, part of the 50S ribosomal subunit. Contacts protein L20.

Its function is as follows. This protein binds to 23S rRNA in the presence of protein L20. This Tolumonas auensis (strain DSM 9187 / NBRC 110442 / TA 4) protein is Large ribosomal subunit protein bL21.